Consider the following 25-residue polypeptide: C-type natriuretic peptide (25 aa).

A disulfide bridge connects residues Cys-9 and Cys-25.

In terms of tissue distribution, venom gland.

The protein localises to the secreted. In terms of biological role, snake venom natriuretic peptide that has a vasorelaxant activity in rat aortic strips and a diuretic potency in anesthetized rats. May act by activating natriuretic receptors (NPR1 and/or NPR2). In Crotalus atrox (Western diamondback rattlesnake), this protein is C-type natriuretic peptide.